Consider the following 352-residue polypeptide: MIEIDGSYGEGGGQLVRTAVALSAVTGEEIKVTNIRENRPNPGLKQQHLKALETAAKICGARVSGLSQGSSELFFAPVEIKGGKYNIDIGTAGSITLLLQCIMPALPFVEEKVELTIRGGTDVAWSPTIDYLKHVTLRALEQFGYAGSVTLKERGYYPRGGGSVSAVFEPCKLHGFHFRKTEGNKKTESNPVGEGLKGEKSMMEEIIGVSHASNLPAHVPARQAESARSLFLEAGYDARIDVSSSEFFSTGSGITLWKGYCGGSALGKKGLPAEKVGRQAAEEVIKELRAGAAVDIHLADQLIPYMALAGNSSFTVRELTLHAATNIWVTEQFLDVKFKIKEKEGLFEVSVG.

ATP-binding positions include glutamine 100 and 297-301; that span reads HLADQ. Histidine 322 (tele-AMP-histidine intermediate) is an active-site residue.

It belongs to the RNA 3'-terminal cyclase family. Type 1 subfamily.

Its subcellular location is the cytoplasm. It carries out the reaction a 3'-end 3'-phospho-ribonucleotide-RNA + ATP = a 3'-end 2',3'-cyclophospho-ribonucleotide-RNA + AMP + diphosphate. Functionally, catalyzes the conversion of 3'-phosphate to a 2',3'-cyclic phosphodiester at the end of RNA. The mechanism of action of the enzyme occurs in 3 steps: (A) adenylation of the enzyme by ATP; (B) transfer of adenylate to an RNA-N3'P to produce RNA-N3'PP5'A; (C) and attack of the adjacent 2'-hydroxyl on the 3'-phosphorus in the diester linkage to produce the cyclic end product. The biological role of this enzyme is unknown but it is likely to function in some aspects of cellular RNA processing. The sequence is that of RNA 3'-terminal phosphate cyclase from Methanosarcina mazei (strain ATCC BAA-159 / DSM 3647 / Goe1 / Go1 / JCM 11833 / OCM 88) (Methanosarcina frisia).